A 227-amino-acid chain; its full sequence is Ribonuclease S-5 (227 aa).

Residues Met1 to Gly27 form the signal peptide. Gln36 serves as a coordination point for RNA. Cys42 and Cys49 are oxidised to a cystine. Asn45 is a glycosylation site (N-linked (GlcNAc...) asparagine). Residues His60, Asn97 to Val98, Phe107, Lys110 to Glu111, and Lys114 to His115 each bind RNA. The active-site Proton donor is His60. An intrachain disulfide couples Cys75 to Cys118. Glu111 is an active-site residue. His115 serves as the catalytic Proton acceptor. Residue Asn143 is glycosylated (N-linked (GlcNAc...) asparagine). 2 cysteine pairs are disulfide-bonded: Cys182–Cys220 and Cys197–Cys208.

It belongs to the RNase T2 family. Post-translationally, N-glycan at Asn-45 consists of disaccharide (GlcNAc-GlcNAc). N-linked core structure at Asn-143 contains xylose.

It carries out the reaction a ribonucleotidyl-ribonucleotide-RNA + H2O = a 3'-end 3'-phospho-ribonucleotide-RNA + a 5'-end dephospho-ribonucleoside-RNA + H(+). In terms of biological role, self-incompatibility (SI) is the inherited ability of a flowering plant to prevent self-fertilization by discriminating between self and non-self pollen during pollination. In many species, self-incompatibility is controlled by the single, multiallelic locus S. The polypeptide is Ribonuclease S-5 (Pyrus pyrifolia (Chinese pear)).